A 152-amino-acid chain; its full sequence is Venom protein family 1 protein 2 (152 aa).

The signal sequence occupies residues 1–21 (MAKLVFISFLVASFCLIGCFG). Residues cysteine 70 and cysteine 150 are joined by a disulfide bond.

This sequence belongs to the insect vpf1 family. As to expression, expressed by the venom gland (posterior main gland) (at protein level).

Its subcellular location is the secreted. The chain is Venom protein family 1 protein 2 from Platymeris rhadamanthus (Red spot assassin bug).